The following is a 327-amino-acid chain: UDP-glucose 4-epimerase (327 aa).

Thr119 contacts substrate. The active-site Proton acceptor is the Tyr143.

It belongs to the NAD(P)-dependent epimerase/dehydratase family. NAD(+) is required as a cofactor.

The enzyme catalyses UDP-alpha-D-glucose = UDP-alpha-D-galactose. It participates in carbohydrate metabolism; galactose metabolism. Its pathway is glycan metabolism; exopolysaccharide biosynthesis. The sequence is that of UDP-glucose 4-epimerase (exoB) from Rhizobium leguminosarum bv. trifolii.